The primary structure comprises 189 residues: Group XIIA secretory phospholipase A2 (189 aa).

An N-terminal signal peptide occupies residues 1 to 22; it reads MALLSRPALTLLLLLMAAVVRC. Residues Gly88, Pro90, and Phe92 each contribute to the Ca(2+) site. His110 is a catalytic residue. Residue Asp111 coordinates Ca(2+). Residue Asp125 is part of the active site.

Ca(2+) is required as a cofactor. As to expression, abundantly expressed in heart, skeletal muscle, kidney, liver and pancreas.

The protein resides in the secreted. It is found in the cytoplasm. It carries out the reaction a 1,2-diacyl-sn-glycero-3-phosphocholine + H2O = a 1-acyl-sn-glycero-3-phosphocholine + a fatty acid + H(+). In terms of biological role, PA2 catalyzes the calcium-dependent hydrolysis of the 2-acyl groups in 3-sn-phosphoglycerides. Does not exhibit detectable activity toward sn-2-arachidonoyl- or linoleoyl-phosphatidylcholine or -phosphatidylethanolamine. The protein is Group XIIA secretory phospholipase A2 (PLA2G12A) of Homo sapiens (Human).